A 397-amino-acid chain; its full sequence is Tryptophan synthase beta chain (397 aa).

At Lys87 the chain carries N6-(pyridoxal phosphate)lysine.

The protein belongs to the TrpB family. Tetramer of two alpha and two beta chains. The cofactor is pyridoxal 5'-phosphate.

The catalysed reaction is (1S,2R)-1-C-(indol-3-yl)glycerol 3-phosphate + L-serine = D-glyceraldehyde 3-phosphate + L-tryptophan + H2O. Its pathway is amino-acid biosynthesis; L-tryptophan biosynthesis; L-tryptophan from chorismate: step 5/5. Functionally, the beta subunit is responsible for the synthesis of L-tryptophan from indole and L-serine. The sequence is that of Tryptophan synthase beta chain from Enterobacter sp. (strain 638).